Reading from the N-terminus, the 343-residue chain is MLQTDNLTAAQPQRIVAAQTASAQEELLERALRPKTLDDYIGQHKAKEQLAIFIQAAKKRGEALDHVLLFGPPGLGKTTLAHIIAKELGVNLRQTSGPVLERAGDLAALLTNLDPHDVLFIDEIHRLSPVVEEILYPALEDYRLDIMIGEGPAARSVKIDLPPFTLVGATTRAGMLTNPLRDRFGIVSRLEFYENRDLTTIVSRSAQLLQLDMGEEGAMEVAKRSRGTPRIANRLLRRVRDFADVKNNGVIDAAVADAALSMLDVDAQGLDVMDRKFLEAVLHKFGGGPVGLDNVAAAIGESTDTIEDVIEPYLIQQGFLQRTPRGRMATERAYLHFGLPVEK.

Residues T4 to Y193 form a large ATPase domain (RuvB-L) region. Residues L32, R33, G74, K77, T78, T79, E140–Y142, R183, Y193, and R230 each bind ATP. T78 contributes to the Mg(2+) binding site. The segment at E194–D264 is small ATPAse domain (RuvB-S). Residues A267–K343 are head domain (RuvB-H). DNA contacts are provided by R322 and R327.

The protein belongs to the RuvB family. In terms of assembly, homohexamer. Forms an RuvA(8)-RuvB(12)-Holliday junction (HJ) complex. HJ DNA is sandwiched between 2 RuvA tetramers; dsDNA enters through RuvA and exits via RuvB. An RuvB hexamer assembles on each DNA strand where it exits the tetramer. Each RuvB hexamer is contacted by two RuvA subunits (via domain III) on 2 adjacent RuvB subunits; this complex drives branch migration. In the full resolvosome a probable DNA-RuvA(4)-RuvB(12)-RuvC(2) complex forms which resolves the HJ.

It is found in the cytoplasm. The enzyme catalyses ATP + H2O = ADP + phosphate + H(+). The RuvA-RuvB-RuvC complex processes Holliday junction (HJ) DNA during genetic recombination and DNA repair, while the RuvA-RuvB complex plays an important role in the rescue of blocked DNA replication forks via replication fork reversal (RFR). RuvA specifically binds to HJ cruciform DNA, conferring on it an open structure. The RuvB hexamer acts as an ATP-dependent pump, pulling dsDNA into and through the RuvAB complex. RuvB forms 2 homohexamers on either side of HJ DNA bound by 1 or 2 RuvA tetramers; 4 subunits per hexamer contact DNA at a time. Coordinated motions by a converter formed by DNA-disengaged RuvB subunits stimulates ATP hydrolysis and nucleotide exchange. Immobilization of the converter enables RuvB to convert the ATP-contained energy into a lever motion, pulling 2 nucleotides of DNA out of the RuvA tetramer per ATP hydrolyzed, thus driving DNA branch migration. The RuvB motors rotate together with the DNA substrate, which together with the progressing nucleotide cycle form the mechanistic basis for DNA recombination by continuous HJ branch migration. Branch migration allows RuvC to scan DNA until it finds its consensus sequence, where it cleaves and resolves cruciform DNA. The sequence is that of Holliday junction branch migration complex subunit RuvB from Neisseria gonorrhoeae (strain NCCP11945).